We begin with the raw amino-acid sequence, 149 residues long: Calmodulin-1 (149 aa).

Residue Ala2 is modified to N-acetylalanine. EF-hand domains follow at residues 8-43 (DQISEFKEAFSLFDKDGDGCITTKELGTVMRSLGQN), 44-79 (PTEAELQDMINEVDADGNGTIDFPEFLNLMARKMKD), 81-116 (DSEEELKEAFRVFDKDQNGFISAAELRHVMTNLGEK), and 117-149 (LTDEEVDEMIREADVDGDGQINYEEFVKVMMAK). Residues Asp21, Asp23, Asp25, Cys27, Glu32, Asp57, Asp59, Asn61, Thr63, Glu68, Asp94, Asp96, Asn98, and Glu105 each coordinate Ca(2+). Lys116 is subject to N6,N6,N6-trimethyllysine. Ca(2+)-binding residues include Asp130, Asp132, Asp134, Gln136, and Glu141.

It belongs to the calmodulin family.

In terms of biological role, calmodulin mediates the control of a large number of enzymes, ion channels and other proteins by Ca(2+). Among the enzymes to be stimulated by the calmodulin-Ca(2+) complex are a number of protein kinases and phosphatases. This Petunia hybrida (Petunia) protein is Calmodulin-1 (CAM81).